Reading from the N-terminus, the 334-residue chain is Cathepsin J (334 aa).

Positions 1 to 17 (MTPTVLLLILCFGVASG) are cleaved as a signal peptide. Positions 18–113 (AQAHDPKLDA…PHAQNHVSIG (96 aa)) are cleaved as a propeptide — activation peptide. N72 is a glycosylation site (N-linked (GlcNAc...) asparagine). 2 disulfides stabilise this stretch: C135-C178 and C169-C211. The active site involves C138. N217, N221, and N268 each carry an N-linked (GlcNAc...) asparagine glycan. A disulfide bridge connects residues C269 and C322. Catalysis depends on residues H276 and N300.

This sequence belongs to the peptidase C1 family. As to expression, expressed specifically in placenta.

Its subcellular location is the lysosome. This Mus musculus (Mouse) protein is Cathepsin J (Ctsj).